Here is a 205-residue protein sequence, read N- to C-terminus: dITP/XTP pyrophosphatase (205 aa).

Residue 10 to 15 (TKNEGK) coordinates substrate. The Mg(2+) site is built by E44 and D73. The active-site Proton acceptor is D73. Substrate is bound by residues S74, 156-159 (FGYD), K179, and 184-185 (HR).

Belongs to the HAM1 NTPase family. As to quaternary structure, homodimer. Requires Mg(2+) as cofactor.

The enzyme catalyses XTP + H2O = XMP + diphosphate + H(+). It carries out the reaction dITP + H2O = dIMP + diphosphate + H(+). The catalysed reaction is ITP + H2O = IMP + diphosphate + H(+). In terms of biological role, pyrophosphatase that catalyzes the hydrolysis of nucleoside triphosphates to their monophosphate derivatives, with a high preference for the non-canonical purine nucleotides XTP (xanthosine triphosphate), dITP (deoxyinosine triphosphate) and ITP. Seems to function as a house-cleaning enzyme that removes non-canonical purine nucleotides from the nucleotide pool, thus preventing their incorporation into DNA/RNA and avoiding chromosomal lesions. In Dictyoglomus thermophilum (strain ATCC 35947 / DSM 3960 / H-6-12), this protein is dITP/XTP pyrophosphatase.